Here is a 57-residue protein sequence, read N- to C-terminus: UPF0509 protein YciZ (57 aa).

It belongs to the UPF0509 family.

The sequence is that of UPF0509 protein YciZ (yciZ) from Shigella flexneri.